The primary structure comprises 466 residues: Glutamate--tRNA ligase 1 (466 aa).

Positions 9-19 (PSPTGYLHIGG) match the 'HIGH' region motif. Cys-98, Cys-100, Cys-125, and Glu-127 together coordinate Zn(2+). A 'KMSKS' region motif is present at residues 236-240 (KLSKR). Lys-239 provides a ligand contact to ATP.

It belongs to the class-I aminoacyl-tRNA synthetase family. Glutamate--tRNA ligase type 1 subfamily. In terms of assembly, monomer. The cofactor is Zn(2+).

Its subcellular location is the cytoplasm. The enzyme catalyses tRNA(Glu) + L-glutamate + ATP = L-glutamyl-tRNA(Glu) + AMP + diphosphate. Functionally, catalyzes the attachment of glutamate to tRNA(Glu) in a two-step reaction: glutamate is first activated by ATP to form Glu-AMP and then transferred to the acceptor end of tRNA(Glu). This is Glutamate--tRNA ligase 1 from Acidithiobacillus ferrooxidans (strain ATCC 53993 / BNL-5-31) (Leptospirillum ferrooxidans (ATCC 53993)).